A 632-amino-acid chain; its full sequence is Phosphomethylpyrimidine synthase (632 aa).

Positions 1–23 (MNIRSNPQQTVPAVTTGPLSSSR) are enriched in polar residues. The segment at 1–26 (MNIRSNPQQTVPAVTTGPLSSSRKIF) is disordered. Residues Asn-221, Met-250, Tyr-279, His-315, 335-337 (SRG), 376-379 (DGLR), and Glu-415 contribute to the substrate site. Residue His-419 coordinates Zn(2+). Substrate is bound at residue Tyr-442. His-483 is a binding site for Zn(2+). [4Fe-4S] cluster-binding residues include Cys-563, Cys-566, and Cys-571.

This sequence belongs to the ThiC family. As to quaternary structure, homodimer. The cofactor is [4Fe-4S] cluster.

The enzyme catalyses 5-amino-1-(5-phospho-beta-D-ribosyl)imidazole + S-adenosyl-L-methionine = 4-amino-2-methyl-5-(phosphooxymethyl)pyrimidine + CO + 5'-deoxyadenosine + formate + L-methionine + 3 H(+). It functions in the pathway cofactor biosynthesis; thiamine diphosphate biosynthesis. Its function is as follows. Catalyzes the synthesis of the hydroxymethylpyrimidine phosphate (HMP-P) moiety of thiamine from aminoimidazole ribotide (AIR) in a radical S-adenosyl-L-methionine (SAM)-dependent reaction. This Bradyrhizobium diazoefficiens (strain JCM 10833 / BCRC 13528 / IAM 13628 / NBRC 14792 / USDA 110) protein is Phosphomethylpyrimidine synthase.